We begin with the raw amino-acid sequence, 566 residues long: MKVITCEIAWHNKEPVYSLDFQHGTDGKINRLASAGVDTAVRVWKVEKGPDGKAIVEFLSNLARHTKAVNVVRFSPSGEVLASGGDDAVILLWKLNDSKELEPLAFQDEDEAQLNKENWTVVKTLRGHLEDVYDICWTSDGNYMASASVDNTAIMWDVVKGQKVSILNEHKSYVQGITWDPLGQYIATLSCDRVLRVYNTQTKRVAFNVTKMPSESGAEGEARSYRMFHDDSMKSFFRRLSFTPDGSLLLTPAGCVESGENVTNTTYVFSRNNLKRPMGHLPCPGKATLAVRCCPVYFELRQALNKGEVSQKSSPALLNLPYRLVFAVASEDSVLFYDTEQSFPFGYVSNIHYHTLSDISWSSDGAFLAISSTDGYCSFVTFEKDELGIPLKEKPQIHVRTSVVTEKKVKKSQPNKVISPGSRLTEGTSLSTPTLQPKTPVAAAKDLPSTPVGIKNVPVSSSEERKISQPASQSTKVNQPRRITLNTLQAWSKTPRRVNLIPLKPDTPASVYTDTVPVPPSSEQEHERPLPSGDSLQNPPASKRPRTEEMPLSVSAEDQIGCKPNK.

WD repeat units lie at residues 11-54 (HNKE…DGKA), 64-103 (RHTKAVNVVRFSPSGEVLASGGDDAVILLWKLNDSKELEP), 127-166 (GHLEDVYDICWTSDGNYMASASVDNTAIMWDVVKGQKVSI), 169-208 (EHKSYVQGITWDPLGQYIATLSCDRVLRVYNTQTKRVAFN), 228-279 (FHDD…RPMG), and 351-392 (IHYH…IPLK). 2 disordered regions span residues 411–481 (KSQP…NQPR) and 501–566 (IPLK…KPNK). 2 stretches are compositionally biased toward polar residues: residues 425–437 (TEGTSLSTPTLQP) and 469–478 (QPASQSTKVN).

This sequence belongs to the WD repeat HIR1 family. In terms of assembly, interacts with CHAF1A.

The protein localises to the nucleus. Its function is as follows. Acts as a component of the histone chaperone complex chromatin assembly factor 1 (CAF-1), which assembles histone octamers onto DNA during replication and repair. CAF-1 performs the first step of the nucleosome assembly process, bringing newly synthesized histones H3 and H4 to replicating DNA; histones H2A/H2B can bind to this chromatin precursor subsequent to DNA replication to complete the histone octamer. The chain is Chromatin assembly factor 1 subunit B (CHAF1B) from Gallus gallus (Chicken).